We begin with the raw amino-acid sequence, 258 residues long: Indole-3-glycerol phosphate synthase (258 aa).

This sequence belongs to the TrpC family.

The enzyme catalyses 1-(2-carboxyphenylamino)-1-deoxy-D-ribulose 5-phosphate + H(+) = (1S,2R)-1-C-(indol-3-yl)glycerol 3-phosphate + CO2 + H2O. It functions in the pathway amino-acid biosynthesis; L-tryptophan biosynthesis; L-tryptophan from chorismate: step 4/5. This is Indole-3-glycerol phosphate synthase from Chlorobium phaeovibrioides (strain DSM 265 / 1930) (Prosthecochloris vibrioformis (strain DSM 265)).